Consider the following 938-residue polypeptide: Isoleucine--tRNA ligase (938 aa).

Residues Pro-58–His-68 carry the 'HIGH' region motif. Glu-561 provides a ligand contact to L-isoleucyl-5'-AMP. Residues Lys-602–Ser-606 carry the 'KMSKS' region motif. Lys-605 lines the ATP pocket. Residues Cys-901, Cys-904, Cys-921, and Cys-924 each coordinate Zn(2+).

Belongs to the class-I aminoacyl-tRNA synthetase family. IleS type 1 subfamily. As to quaternary structure, monomer. Zn(2+) is required as a cofactor.

It localises to the cytoplasm. It carries out the reaction tRNA(Ile) + L-isoleucine + ATP = L-isoleucyl-tRNA(Ile) + AMP + diphosphate. Catalyzes the attachment of isoleucine to tRNA(Ile). As IleRS can inadvertently accommodate and process structurally similar amino acids such as valine, to avoid such errors it has two additional distinct tRNA(Ile)-dependent editing activities. One activity is designated as 'pretransfer' editing and involves the hydrolysis of activated Val-AMP. The other activity is designated 'posttransfer' editing and involves deacylation of mischarged Val-tRNA(Ile). This chain is Isoleucine--tRNA ligase, found in Baumannia cicadellinicola subsp. Homalodisca coagulata.